Here is a 213-residue protein sequence, read N- to C-terminus: Nicolin-1 (213 aa).

In terms of assembly, part of the neuronal tubulin polyglutamylase complex which contains TPGS1, TPGS2, TTLL1, LRRC49 and NICN1. In terms of tissue distribution, high expression level is found in brain, testis, liver and kidney. Weak expression in spleen, leukocytes, small intestine and colon.

It localises to the nucleus. The chain is Nicolin-1 (NICN1) from Homo sapiens (Human).